The primary structure comprises 39 residues: Photosystem II reaction center protein L (39 aa).

The chain crosses the membrane as a helical span at residues 18-38 (ILYWGLLLIFVLAVLFSNYFF).

It belongs to the PsbL family. As to quaternary structure, PSII is composed of 1 copy each of membrane proteins PsbA, PsbB, PsbC, PsbD, PsbE, PsbF, PsbH, PsbI, PsbJ, PsbK, PsbL, PsbM, PsbT, PsbX, PsbY, PsbZ, Psb30/Ycf12, at least 3 peripheral proteins of the oxygen-evolving complex and a large number of cofactors. It forms dimeric complexes.

Its subcellular location is the plastid membrane. Functionally, one of the components of the core complex of photosystem II (PSII). PSII is a light-driven water:plastoquinone oxidoreductase that uses light energy to abstract electrons from H(2)O, generating O(2) and a proton gradient subsequently used for ATP formation. It consists of a core antenna complex that captures photons, and an electron transfer chain that converts photonic excitation into a charge separation. This subunit is found at the monomer-monomer interface and is required for correct PSII assembly and/or dimerization. This is Photosystem II reaction center protein L from Cuscuta pentagona (Five-angled dodder).